Here is a 930-residue protein sequence, read N- to C-terminus: Bifunctional uridylyltransferase/uridylyl-removing enzyme (930 aa).

Positions 1–387 are uridylyltransferase; sequence MAPASEAGPA…IMGLFRRKKR (387 aa). The tract at residues 388-741 is uridylyl-removing; sequence LKPEYSLVNG…LDPDPDRDAT (354 aa). In terms of domain architecture, HD spans 504–626; it reads VDEHTIQCIS…VRSKKRLDLL (123 aa). ACT domains are found at residues 742–818 and 852–927; these read RACF…VVAR and IIEV…GAER.

This sequence belongs to the GlnD family. Mg(2+) serves as cofactor.

It carries out the reaction [protein-PII]-L-tyrosine + UTP = [protein-PII]-uridylyl-L-tyrosine + diphosphate. The catalysed reaction is [protein-PII]-uridylyl-L-tyrosine + H2O = [protein-PII]-L-tyrosine + UMP + H(+). Uridylyltransferase (UTase) activity is inhibited by glutamine, while glutamine activates uridylyl-removing (UR) activity. Functionally, modifies, by uridylylation and deuridylylation, the PII regulatory proteins (GlnB and homologs), in response to the nitrogen status of the cell that GlnD senses through the glutamine level. Under low glutamine levels, catalyzes the conversion of the PII proteins and UTP to PII-UMP and PPi, while under higher glutamine levels, GlnD hydrolyzes PII-UMP to PII and UMP (deuridylylation). Thus, controls uridylylation state and activity of the PII proteins, and plays an important role in the regulation of nitrogen fixation and metabolism. In Cereibacter sphaeroides (strain ATCC 17023 / DSM 158 / JCM 6121 / CCUG 31486 / LMG 2827 / NBRC 12203 / NCIMB 8253 / ATH 2.4.1.) (Rhodobacter sphaeroides), this protein is Bifunctional uridylyltransferase/uridylyl-removing enzyme.